A 519-amino-acid chain; its full sequence is Putative cysteine ligase BshC (519 aa).

Coiled-coil stretches lie at residues 51-71 (LNAL…SLKE) and 440-464 (TKLN…HEQA).

This sequence belongs to the BshC family.

Functionally, involved in bacillithiol (BSH) biosynthesis. May catalyze the last step of the pathway, the addition of cysteine to glucosamine malate (GlcN-Mal) to generate BSH. This chain is Putative cysteine ligase BshC, found in Exiguobacterium sibiricum (strain DSM 17290 / CCUG 55495 / CIP 109462 / JCM 13490 / 255-15).